Reading from the N-terminus, the 259-residue chain is Phosphoribosylaminoimidazole-succinocarboxamide synthase (259 aa).

The protein belongs to the SAICAR synthetase family.

The catalysed reaction is 5-amino-1-(5-phospho-D-ribosyl)imidazole-4-carboxylate + L-aspartate + ATP = (2S)-2-[5-amino-1-(5-phospho-beta-D-ribosyl)imidazole-4-carboxamido]succinate + ADP + phosphate + 2 H(+). Its pathway is purine metabolism; IMP biosynthesis via de novo pathway; 5-amino-1-(5-phospho-D-ribosyl)imidazole-4-carboxamide from 5-amino-1-(5-phospho-D-ribosyl)imidazole-4-carboxylate: step 1/2. This chain is Phosphoribosylaminoimidazole-succinocarboxamide synthase, found in Hyphomonas neptunium (strain ATCC 15444).